We begin with the raw amino-acid sequence, 657 residues long: MEENIESVEEWVNKLDIETTKDIHVPKLLFDQVIGQDQAGEIVKKAALQRRHVILIGEPGTGKSMLAQSMVDFLPKSELEDILVFPNPEDPNKPKIKTVPAGKGKEIVRQYQIKAEREKRDRSRSIMFVIFSVVLLGIIAAIVLRSITLIFFAIMAAAFLYMAMAFNPVIRNERAMVPKLLVSHNPNDKPPFVDSTGAHSGALLGDVRHDPFQSGGLETPAHERVEAGNIHKAHKGVLFIDEINLLRPEDQQAILTALQEKKYPISGQSERSAGAMVQTEPVPCDFVLVAAGNYDAIRNMHPALRSRIRGYGYEVVVNDYMDDNDENRRKLVQFIAQEVEKDKKIPHFDKSAIIEVIKEAQKRSGRRNKLTLRLRELGGLVRVAGDIAVSQKKTVVTAADVIAAKNLAKPLEQQIADRSIEIKKIYKTFRTEGSVVGMVNGLAVVGADTGMSEYTGVVLPIVAEVTPAEHKGAGNIIATGKLGDIAKEAVLNVSAVFKKLTGKDISNMDIHIQFVGTYEGVEGDSASVSIATAVISAIENIPVDQSVAMTGSLSVRGDVLPVGGVTAKVEAAIEAGLNKVIVPELNYSDIILDADHVNKIEIIPAKTIEDVLRVALVNSPEKEKLFDRISNLINAAKIIKPQRPATPATTRAGNNAA.

The Cytoplasmic portion of the chain corresponds to 1–123; it reads MEENIESVEE…KAEREKRDRS (123 aa). An ATP-binding site is contributed by 57 to 64; it reads GEPGTGKS. A helical transmembrane segment spans residues 124-144; it reads RSIMFVIFSVVLLGIIAAIVL. Position 145 (arginine 145) is a topological domain, extracellular. The helical transmembrane segment at 146–166 threads the bilayer; it reads SITLIFFAIMAAAFLYMAMAF. The Cytoplasmic segment spans residues 167–657; that stretch reads NPVIRNERAM…ATTRAGNNAA (491 aa). In terms of domain architecture, Lon proteolytic spans 433–618; it reads GSVVGMVNGL…EDVLRVALVN (186 aa). Catalysis depends on residues serine 525 and lysine 568.

Belongs to the peptidase S16 family. Archaeal LonB subfamily. In terms of assembly, homohexamer. Organized in a ring with a central cavity.

Its subcellular location is the cell membrane. Its function is as follows. ATP-dependent serine protease that mediates the selective degradation of mutant and abnormal proteins as well as certain short-lived regulatory proteins. Degrades polypeptides processively. This chain is Archaeal Lon protease, found in Thermoplasma acidophilum (strain ATCC 25905 / DSM 1728 / JCM 9062 / NBRC 15155 / AMRC-C165).